The chain runs to 515 residues: Protein disulfide-isomerase (515 aa).

The signal sequence occupies residues 1-22; that stretch reads MAVVRVRAIVALLCLVAALGLA. 2 Thioredoxin domains span residues 23 to 139 and 351 to 480; these read EPLE…KRTG and FLEG…SGGQ. Residues Cys58, Cys61, Cys402, and Cys405 each act as nucleophile in the active site. Disulfide bonds link Cys58-Cys61 and Cys402-Cys405. Residues 477–515 are disordered; that stretch reads SGGQDGAAADDDLEDLETDEETDLEEGDDDEQKIQKDEL. Residues 484-507 show a composition bias toward acidic residues; that stretch reads AADDDLEDLETDEETDLEEGDDDE. A Prevents secretion from ER motif is present at residues 512-515; it reads KDEL.

This sequence belongs to the protein disulfide isomerase family. As to quaternary structure, heterodimer; heterodimerizes with the protein microsomal triglyceride transfer MTTP. Homodimer. Monomers and homotetramers may also occur. Also constitutes the structural subunit of prolyl 4-hydroxylase. Stabilizes this enzyme and retains it in the ER without contributing to the catalytic activity. Binds UBQLN1.

Its subcellular location is the endoplasmic reticulum. The protein localises to the endoplasmic reticulum lumen. It is found in the cell membrane. The enzyme catalyses Catalyzes the rearrangement of -S-S- bonds in proteins.. In terms of biological role, this multifunctional protein catalyzes the formation, breakage and rearrangement of disulfide bonds. At the cell surface, seems to act as a reductase that cleaves disulfide bonds of proteins attached to the cell. May therefore cause structural modifications of exofacial proteins. Inside the cell, seems to form/rearrange disulfide bonds of nascent proteins. At high concentrations, functions as a chaperone that inhibits aggregation of misfolded proteins. At low concentrations, facilitates aggregation (anti-chaperone activity). Also acts a structural subunit of various enzymes such as prolyl 4-hydroxylase. The protein is Protein disulfide-isomerase (P4HB) of Gallus gallus (Chicken).